A 143-amino-acid polypeptide reads, in one-letter code: SsrA-binding protein (143 aa).

It belongs to the SmpB family.

It is found in the cytoplasm. Its function is as follows. Required for rescue of stalled ribosomes mediated by trans-translation. Binds to transfer-messenger RNA (tmRNA), required for stable association of tmRNA with ribosomes. tmRNA and SmpB together mimic tRNA shape, replacing the anticodon stem-loop with SmpB. tmRNA is encoded by the ssrA gene; the 2 termini fold to resemble tRNA(Ala) and it encodes a 'tag peptide', a short internal open reading frame. During trans-translation Ala-aminoacylated tmRNA acts like a tRNA, entering the A-site of stalled ribosomes, displacing the stalled mRNA. The ribosome then switches to translate the ORF on the tmRNA; the nascent peptide is terminated with the 'tag peptide' encoded by the tmRNA and targeted for degradation. The ribosome is freed to recommence translation, which seems to be the essential function of trans-translation. The protein is SsrA-binding protein of Mycoplasmoides gallisepticum (strain R(low / passage 15 / clone 2)) (Mycoplasma gallisepticum).